The chain runs to 444 residues: Aspartate--tRNA(Asp/Asn) ligase (444 aa).

Glutamate 176 is a binding site for L-aspartate. Residues 198–201 form an aspartate region; the sequence is QLFK. Arginine 220 is a binding site for L-aspartate. ATP is bound by residues 220-222, 228-230, and glutamate 367; these read RAE and RHL. Positions 367 and 370 each coordinate Mg(2+). L-aspartate contacts are provided by serine 370 and arginine 374. Residue 415-418 coordinates ATP; it reads GCER.

Belongs to the class-II aminoacyl-tRNA synthetase family. Type 2 subfamily. Homodimer. Requires Mg(2+) as cofactor.

It is found in the cytoplasm. The enzyme catalyses tRNA(Asx) + L-aspartate + ATP = L-aspartyl-tRNA(Asx) + AMP + diphosphate. Functionally, aspartyl-tRNA synthetase with relaxed tRNA specificity since it is able to aspartylate not only its cognate tRNA(Asp) but also tRNA(Asn). Reaction proceeds in two steps: L-aspartate is first activated by ATP to form Asp-AMP and then transferred to the acceptor end of tRNA(Asp/Asn). The polypeptide is Aspartate--tRNA(Asp/Asn) ligase (Methanosarcina acetivorans (strain ATCC 35395 / DSM 2834 / JCM 12185 / C2A)).